Here is a 229-residue protein sequence, read N- to C-terminus: Protein-L-isoaspartate O-methyltransferase (229 aa).

The active site involves serine 74.

Belongs to the methyltransferase superfamily. L-isoaspartyl/D-aspartyl protein methyltransferase family.

The protein localises to the cytoplasm. The enzyme catalyses [protein]-L-isoaspartate + S-adenosyl-L-methionine = [protein]-L-isoaspartate alpha-methyl ester + S-adenosyl-L-homocysteine. Its function is as follows. Catalyzes the methyl esterification of L-isoaspartyl residues in peptides and proteins that result from spontaneous decomposition of normal L-aspartyl and L-asparaginyl residues. It plays a role in the repair and/or degradation of damaged proteins. This chain is Protein-L-isoaspartate O-methyltransferase, found in Pelotomaculum thermopropionicum (strain DSM 13744 / JCM 10971 / SI).